Here is a 156-residue protein sequence, read N- to C-terminus: uncharacterized protein (156 aa).

An N-acetyltransferase domain is found at 1 to 145 (MIIRKFSSKD…DAILMIKKKP (145 aa)).

The protein belongs to the acetyltransferase family.

The protein localises to the cytoplasm. This is an uncharacterized protein from Methanocaldococcus jannaschii (strain ATCC 43067 / DSM 2661 / JAL-1 / JCM 10045 / NBRC 100440) (Methanococcus jannaschii).